A 146-amino-acid polypeptide reads, in one-letter code: UPF0260 protein VP2169 (146 aa).

It belongs to the UPF0260 family.

The protein is UPF0260 protein VP2169 of Vibrio parahaemolyticus serotype O3:K6 (strain RIMD 2210633).